The primary structure comprises 239 residues: Small ribosomal subunit protein uS5 (239 aa).

Positions 1–62 (MADETEIQAA…DDRRGSEEQG (62 aa)) are disordered. Positions 9–19 (AAAPAEAAPGA) are enriched in low complexity. Basic and acidic residues predominate over residues 34 to 62 (GGNDRGGDRGRGRDGRGRRDDRRGSEEQG). The region spanning 65–128 (LIEKLVHINR…AAAKKAMVRV (64 aa)) is the S5 DRBM domain.

Belongs to the universal ribosomal protein uS5 family. Part of the 30S ribosomal subunit. Contacts proteins S4 and S8.

Its function is as follows. With S4 and S12 plays an important role in translational accuracy. In terms of biological role, located at the back of the 30S subunit body where it stabilizes the conformation of the head with respect to the body. The sequence is that of Small ribosomal subunit protein uS5 from Rhizorhabdus wittichii (strain DSM 6014 / CCUG 31198 / JCM 15750 / NBRC 105917 / EY 4224 / RW1) (Sphingomonas wittichii).